Here is a 599-residue protein sequence, read N- to C-terminus: Elongation factor 4 (599 aa).

Positions 2-184 (KNIRNFSIIA…RLVRDIPPPQ (183 aa)) constitute a tr-type G domain. GTP is bound by residues 14–19 (DHGKST) and 131–134 (NKID).

It belongs to the TRAFAC class translation factor GTPase superfamily. Classic translation factor GTPase family. LepA subfamily.

The protein resides in the cell inner membrane. It carries out the reaction GTP + H2O = GDP + phosphate + H(+). Functionally, required for accurate and efficient protein synthesis under certain stress conditions. May act as a fidelity factor of the translation reaction, by catalyzing a one-codon backward translocation of tRNAs on improperly translocated ribosomes. Back-translocation proceeds from a post-translocation (POST) complex to a pre-translocation (PRE) complex, thus giving elongation factor G a second chance to translocate the tRNAs correctly. Binds to ribosomes in a GTP-dependent manner. This Salmonella gallinarum (strain 287/91 / NCTC 13346) protein is Elongation factor 4.